A 185-amino-acid chain; its full sequence is MAPKGSCKQQSEEDLLLQDFSRNLSAKSSALFFGNAFIVSAIPIWLYWRIWHMDLIQSAVLYSVMTLVSTYLVAFAYKNVKFVLKHKVAQKREDAVSKEVTRKLSEADNRKMSRKEKDERILWKKNEVADYEATTFSIFYNNTLFLVVVIVASFFILKNFNPTVNYILSISASSGLIALLSTGSK.

N-acetylmethionine is present on Met1. At 1–27 the chain is on the lumenal side; it reads MAPKGSCKQQSEEDLLLQDFSRNLSAK. Phosphoserine is present on Ser11. Residues 28 to 48 traverse the membrane as a helical segment; sequence SSALFFGNAFIVSAIPIWLYW. Residues 49–54 are Cytoplasmic-facing; it reads RIWHMD. A helical membrane pass occupies residues 55–76; that stretch reads LIQSAVLYSVMTLVSTYLVAFA. Residues 77-135 are Lumenal-facing; sequence YKNVKFVLKHKVAQKREDAVSKEVTRKLSEADNRKMSRKEKDERILWKKNEVADYEATT. Phosphoserine is present on Ser105. The helical transmembrane segment at 136–157 threads the bilayer; that stretch reads FSIFYNNTLFLVVVIVASFFIL. At 158–163 the chain is on the cytoplasmic side; that stretch reads KNFNPT. The helical transmembrane segment at 164–184 threads the bilayer; the sequence is VNYILSISASSGLIALLSTGS.

It belongs to the TRAP-gamma family. Heterotetramer of TRAP-alpha, TRAP-beta, TRAP-delta and TRAP-gamma.

It is found in the endoplasmic reticulum membrane. Functionally, TRAP proteins are part of a complex whose function is to bind calcium to the ER membrane and thereby regulate the retention of ER resident proteins. The sequence is that of Translocon-associated protein subunit gamma (SSR3) from Pongo abelii (Sumatran orangutan).